We begin with the raw amino-acid sequence, 110 residues long: UPF0122 protein SGO_1122 (110 aa).

Belongs to the UPF0122 family.

Its function is as follows. Might take part in the signal recognition particle (SRP) pathway. This is inferred from the conservation of its genetic proximity to ftsY/ffh. May be a regulatory protein. The protein is UPF0122 protein SGO_1122 of Streptococcus gordonii (strain Challis / ATCC 35105 / BCRC 15272 / CH1 / DL1 / V288).